We begin with the raw amino-acid sequence, 340 residues long: Ketol-acid reductoisomerase (NADP(+)) (340 aa).

The region spanning 2–181 (AKVFYNGDIN…GSARAGVIET (180 aa)) is the KARI N-terminal Rossmann domain. NADP(+)-binding positions include 25-28 (YGSQ), arginine 48, serine 52, and 82-85 (DEHQ). Histidine 107 is an active-site residue. Glycine 133 contacts NADP(+). Residues 182–327 (TFQEETETDL…RELREMMPFV (146 aa)) form the KARI C-terminal knotted domain. Residues aspartate 190, glutamate 194, glutamate 226, and glutamate 230 each coordinate Mg(2+). Serine 251 lines the substrate pocket.

Belongs to the ketol-acid reductoisomerase family. Mg(2+) serves as cofactor.

The catalysed reaction is (2R)-2,3-dihydroxy-3-methylbutanoate + NADP(+) = (2S)-2-acetolactate + NADPH + H(+). It carries out the reaction (2R,3R)-2,3-dihydroxy-3-methylpentanoate + NADP(+) = (S)-2-ethyl-2-hydroxy-3-oxobutanoate + NADPH + H(+). The protein operates within amino-acid biosynthesis; L-isoleucine biosynthesis; L-isoleucine from 2-oxobutanoate: step 2/4. It participates in amino-acid biosynthesis; L-valine biosynthesis; L-valine from pyruvate: step 2/4. Its function is as follows. Involved in the biosynthesis of branched-chain amino acids (BCAA). Catalyzes an alkyl-migration followed by a ketol-acid reduction of (S)-2-acetolactate (S2AL) to yield (R)-2,3-dihydroxy-isovalerate. In the isomerase reaction, S2AL is rearranged via a Mg-dependent methyl migration to produce 3-hydroxy-3-methyl-2-ketobutyrate (HMKB). In the reductase reaction, this 2-ketoacid undergoes a metal-dependent reduction by NADPH to yield (R)-2,3-dihydroxy-isovalerate. The chain is Ketol-acid reductoisomerase (NADP(+)) from Halalkalibacterium halodurans (strain ATCC BAA-125 / DSM 18197 / FERM 7344 / JCM 9153 / C-125) (Bacillus halodurans).